The following is a 475-amino-acid chain: FAD-dependent monooxygenase penE (475 aa).

3 residues coordinate FAD: Glu35, Gly49, and Arg108. Tyr216 is an active-site residue. 2 residues coordinate FAD: Asp308 and Ala321. Residue Asn437 is glycosylated (N-linked (GlcNAc...) asparagine). A helical membrane pass occupies residues 446-466 (WGSIWLSPVILCLFCMLFLWP).

The protein belongs to the paxM FAD-dependent monooxygenase family. Requires FAD as cofactor.

It localises to the membrane. It catalyses the reaction [(1'E)-3'-hydroxy-3',7'-dimethylocta-1',6'-dien-1'-yl]-quinolinone B + NADPH + O2 + H(+) = [(1'E)-5'-(3',3'-dimethyloxiran-2'-yl)-3'-hydroxy-3'-methylpent-1'-en-1'-yl]-quinolinone B + NADP(+) + H2O. Its pathway is secondary metabolite biosynthesis. It participates in alkaloid biosynthesis. It functions in the pathway mycotoxin biosynthesis. In terms of biological role, FAD-dependent monooxygenase; part of the gene cluster that mediates the biosynthesis of penigequinolones, potent insecticidal alkaloids that contain a highly modified 10-carbon prenyl group. The first stage is catalyzed by the nonribosomal peptide synthetase penN that condenses anthranilic acid and O-methyl-L-tyrosine to produce 4'-methoxycyclopeptin. 4'-methoxycyclopeptin is then converted to 4'-methoxydehydrocyclopeptin by the ketoglutarate-dependent dioxygenase penM through dehydrogenation to form a double bond between C-alpha and C-beta of the O-methyltyrosine side chain. PenM also converts its first product methoxydehydrocyclopeptin to 4'-methoxycyclopenin. The following conversion of 4'methoxycyclopenin into 4'-methoxyviridicatin is catalyzed by the cyclopenase penL. 4'-methoxyviridicatin is the precursor of quinolone natural products, and is further converted to quinolinone B. The prenyltransferase penI then catalyzes the canonical Friedel-Crafts alkylation of quinolinone B with dimethylallyl cation to yield dimethylallyl quinolone, which is subjected to FAD-dependent dehydrogenation by the FAD-linked oxidoreductase penH to yield conjugated aryl diene. The delta(3') double bond then serves as the site of the second alkylation with DMAPP catalyzed by the prenyltransferase penG to yield a carbenium ion intermediate, which can be attacked by H(2)O to yield a styrenyl quinolone containing a C3'-hydroxyprenyl chain, or undergo cyclization to yield yaequinolones J1 and J2. The conversion of the styrenyl quinolone into the tetrahydrofuran-containing yaequinolone C is performed by the FAD-dependent monooxygenase penE and involves epoxidation of the terminal C7'-C8' olefin, followed by epoxide ring opening initiated by the C3' hydroxyl group. The predicted cysteine hydrolase penJ acts as an epoxide hydrolase that enhances the rate of the 5-exo-tet cyclization step, increasing the yield of yaequinolone C. PenF catalyzes the cationic rearrangement of the epoxide formed by penE (before ring opening to produce yaequinolone C) into yaequinolone D. Finally, the short-chain dehydrogenase/reductase (SDR)-like reductase penD, catalyzes both the dehydration of yaequinolone D and the reduction of the resulting oxonium to yield penigequinolone. This is FAD-dependent monooxygenase penE from Penicillium thymicola.